The following is a 95-amino-acid chain: Small ribosomal subunit protein uS19 (95 aa).

Positions 73 to 95 (EFSPTRTYRGHGADKNAKGSKKK) are disordered.

Belongs to the universal ribosomal protein uS19 family.

In terms of biological role, protein S19 forms a complex with S13 that binds strongly to the 16S ribosomal RNA. The chain is Small ribosomal subunit protein uS19 from Deinococcus geothermalis (strain DSM 11300 / CIP 105573 / AG-3a).